Here is a 303-residue protein sequence, read N- to C-terminus: Mycothiol acetyltransferase (303 aa).

2 N-acetyltransferase domains span residues 4–141 and 154–303; these read ITVR…RSLA and IVLR…ANGA. Glu-38 lines the 1D-myo-inositol 2-(L-cysteinylamino)-2-deoxy-alpha-D-glucopyranoside pocket. 80–82 lines the acetyl-CoA pocket; the sequence is AAV. The 1D-myo-inositol 2-(L-cysteinylamino)-2-deoxy-alpha-D-glucopyranoside site is built by Glu-181, Lys-223, and Glu-234. Acetyl-CoA-binding positions include 238 to 240 and 245 to 251; these read VGI and QGRGLGR. Position 272 (Tyr-272) interacts with 1D-myo-inositol 2-(L-cysteinylamino)-2-deoxy-alpha-D-glucopyranoside. An acetyl-CoA-binding site is contributed by 277–282; sequence NTAAVN.

Belongs to the acetyltransferase family. MshD subfamily. In terms of assembly, monomer.

The catalysed reaction is 1D-myo-inositol 2-(L-cysteinylamino)-2-deoxy-alpha-D-glucopyranoside + acetyl-CoA = mycothiol + CoA + H(+). Functionally, catalyzes the transfer of acetyl from acetyl-CoA to desacetylmycothiol (Cys-GlcN-Ins) to form mycothiol. This chain is Mycothiol acetyltransferase, found in Nocardia farcinica (strain IFM 10152).